Here is a 1773-residue protein sequence, read N- to C-terminus: Plexin-2 (1773 aa).

The signal sequence occupies residues 1-19; that stretch reads MLFIESAFLVLTSLSAAEA. In terms of domain architecture, Sema spans 20-436; sequence ATPFEGGVKQ…MPYGIVMEEL (417 aa). Residues 20–1130 are Extracellular-facing; the sequence is ATPFEGGVKQ…SDHALPSRLS (1111 aa). Asn-65 carries N-linked (GlcNAc...) asparagine glycosylation. Disulfide bonds link Cys-83–Cys-90, Cys-117–Cys-125, Cys-239–Cys-341, Cys-255–Cys-292, Cys-310–Cys-328, Cys-439–Cys-456, Cys-445–Cys-479, Cys-448–Cys-465, and Cys-459–Cys-471. Asn-241 carries N-linked (GlcNAc...) asparagine glycosylation. In terms of domain architecture, PSI 1 spans 438-480; the sequence is TCAHHESCTDCQVSVDPLCQWCHPTQSCTTSSRCSGPLTTQCP. Asn-494 is a glycosylation site (N-linked (GlcNAc...) asparagine). A disulfide bridge connects residues Cys-516 and Cys-538. The N-linked (GlcNAc...) asparagine glycan is linked to Asn-566. The 38-residue stretch at 571 to 608 folds into the PSI 2 domain; sequence DCAGYSTCSTCMSSEFGCQWCSHKCSSSCGSASAKACV. Residues Asn-670 and Asn-693 are each glycosylated (N-linked (GlcNAc...) asparagine). Residues 698–739 form the PSI 3 domain; the sequence is SCSNLAADCSSCLALSPSLSCGWCNRKCSHECHESKATAVCD. IPT/TIG domains follow at residues 741-829, 831-916, and 919-1006; these read PKID…FSFV, VSIF…FEYR, and PSVN…FLMD. N-linked (GlcNAc...) asparagine glycosylation is found at Asn-855, Asn-877, Asn-975, and Asn-1007. The chain crosses the membrane as a helical span at residues 1131–1151; it reads FLILGLLLFTVITLIVMCLIF. Positions 1150 to 1188 form a coiled coil; that stretch reads IFKRRRQEREKEYRKIQLQMENLENNVRKECKQAFAELQ. The Cytoplasmic segment spans residues 1152 to 1764; the sequence is KRRRQEREKE…LHVCLETDNH (613 aa).

Belongs to the plexin family. Interacts with mab-20.

The protein localises to the cell membrane. In terms of biological role, involved as a receptor for mab-20/sema-2a in the formation or stabilization of cell-cell contacts at several stages of epithelial morphogenesis. In early embryonic development, required for proper ventral closure of the epidermis. During male tail morphogenesis, involved in precursor cell sorting and in the formation of distinct sensory rays. Involved in axon guidance of SDQL neurons during neurogenesis. In Caenorhabditis briggsae, this protein is Plexin-2 (plx-2).